The following is a 119-amino-acid chain: Large ribosomal subunit protein uL14 (119 aa).

The protein belongs to the universal ribosomal protein uL14 family. In terms of assembly, part of the 50S ribosomal subunit. Forms a cluster with proteins L3 and L19. In the 70S ribosome, L14 and L19 interact and together make contacts with the 16S rRNA in bridges B5 and B8.

Functionally, binds to 23S rRNA. Forms part of two intersubunit bridges in the 70S ribosome. This chain is Large ribosomal subunit protein uL14, found in Neorickettsia sennetsu (strain ATCC VR-367 / Miyayama) (Ehrlichia sennetsu).